Here is a 492-residue protein sequence, read N- to C-terminus: Ketol-acid reductoisomerase (NADP(+)) (492 aa).

The KARI N-terminal Rossmann domain occupies 17 to 208 (LGVCEFMDRS…GGDRAGVLKS (192 aa)). NADP(+) contacts are provided by residues 45 to 48 (CGAQ), arginine 68, arginine 76, serine 78, and 108 to 110 (DKQ). The active site involves histidine 132. Glycine 158 provides a ligand contact to NADP(+). 2 KARI C-terminal knotted domains span residues 209–353 (SFVA…AEQE) and 354–487 (YYDN…MTEM). Aspartate 217, glutamate 221, glutamate 389, and glutamate 393 together coordinate Mg(2+). Substrate is bound at residue serine 414.

The protein belongs to the ketol-acid reductoisomerase family. Requires Mg(2+) as cofactor.

The enzyme catalyses (2R)-2,3-dihydroxy-3-methylbutanoate + NADP(+) = (2S)-2-acetolactate + NADPH + H(+). The catalysed reaction is (2R,3R)-2,3-dihydroxy-3-methylpentanoate + NADP(+) = (S)-2-ethyl-2-hydroxy-3-oxobutanoate + NADPH + H(+). The protein operates within amino-acid biosynthesis; L-isoleucine biosynthesis; L-isoleucine from 2-oxobutanoate: step 2/4. It participates in amino-acid biosynthesis; L-valine biosynthesis; L-valine from pyruvate: step 2/4. In terms of biological role, involved in the biosynthesis of branched-chain amino acids (BCAA). Catalyzes an alkyl-migration followed by a ketol-acid reduction of (S)-2-acetolactate (S2AL) to yield (R)-2,3-dihydroxy-isovalerate. In the isomerase reaction, S2AL is rearranged via a Mg-dependent methyl migration to produce 3-hydroxy-3-methyl-2-ketobutyrate (HMKB). In the reductase reaction, this 2-ketoacid undergoes a metal-dependent reduction by NADPH to yield (R)-2,3-dihydroxy-isovalerate. The sequence is that of Ketol-acid reductoisomerase (NADP(+)) from Cytophaga hutchinsonii (strain ATCC 33406 / DSM 1761 / CIP 103989 / NBRC 15051 / NCIMB 9469 / D465).